Here is a 162-residue protein sequence, read N- to C-terminus: Podoplanin (162 aa).

The signal sequence occupies residues 1-22 (MWKVSALLFVLGSASLWVLAEG). The interval 23-57 (ASTGQPEDDTETTGLEGGVAMPGAEDDVVTPGTSE) is disordered. Residues 23 to 131 (ASTGQPEDDT…EKDGLSTVTL (109 aa)) are Extracellular-facing. O-linked (GalNAc...) threonine glycosylation is found at Thr-25, Thr-32, Thr-34, Thr-35, Thr-52, Thr-55, Thr-65, Thr-66, Thr-76, and Thr-85. Polar residues predominate over residues 85–108 (TSESTVHAQEQSPSATASNVATSH). The interval 85–119 (TSESTVHAQEQSPSATASNVATSHSTEKVDGDTQT) is disordered. O-linked (GalNAc...) serine glycosylation is found at Ser-86 and Ser-88. O-linked (GalNAc...) threonine glycosylation is present at Thr-89. O-linked (GalNAc...) serine glycosylation is found at Ser-96 and Ser-98. O-linked (GalNAc...) threonine glycosylation occurs at Thr-100. The O-linked (GalNAc...) serine glycan is linked to Ser-102. A glycan (O-linked (GalNAc...) threonine) is linked at Thr-106. Residues Ser-107 and Ser-109 are each glycosylated (O-linked (GalNAc...) serine). Positions 109–119 (STEKVDGDTQT) are enriched in basic and acidic residues. 4 O-linked (GalNAc...) threonine glycosylation sites follow: Thr-110, Thr-117, Thr-119, and Thr-120. A helical transmembrane segment spans residues 132–152 (VGIIVGVLLAIGFIGAIIVVV). The segment at 133–137 (GIIVG) is requires for dimerization and lipid rafts association. Over 153–162 (MRKMSGRYSP) the chain is Cytoplasmic. Residues 154 to 155 (RK) form a requires for interaction with MSN and EZR region.

It belongs to the podoplanin family. Homodimer. Interacts with CLEC1B; the interaction is independent of CLEC1B glycosylation and activates CLEC1B; the interaction is dependent of sialic acid on O-glycans. Interacts with CD9; this interaction is homophilic and attenuates platelet aggregation and pulmonary metastasis induced by PDPN. Interacts with LGALS8; the interaction is glycosylation-dependent; may participate in connection of the lymphatic endothelium to the surrounding extracellular matrix. Interacts with HSPA9. Interacts (via extracellular domain) with CD44; this interaction is required for PDPN-mediated directional migration and regulation of lamellipodia extension/stabilization during cell spreading and migration. Interacts (via cytoplasmic domain) with MSN and EZR; activates RHOA and promotes epithelial-mesenchymal transition. Interacts with CCL21; relocalized PDPN to the basolateral membrane. Post-translationally, extensively O-glycosylated. Contains sialic acid residues. O-glycosylation is necessary for platelet aggregation activity. Disialylated at Thr-52; sialic acid is critical for platelet-aggregating activity and for CLEC1B interaction. The N-terminus is blocked. In terms of processing, cleaved by a metalloprotease within its extracellular (EC) domain, generating a membrane-bound C-terminal fragment (PCTF33) and an extracellular fragment. The resulting membrane-bound C-terminal fragment (PCTF33) is further processed between Val-150 and Val-151 by PSEN1/gamma-secretase generating the intracellular domain of podoplanin (PICD). As to expression, highly expressed in placenta, lung, skeletal muscle and brain. Weakly expressed in brain, kidney and liver. In placenta, expressed on the apical plasma membrane of endothelium. In lung, expressed in alveolar epithelium. Up-regulated in colorectal tumors and expressed in 25% of early oral squamous cell carcinomas.

It localises to the membrane. It is found in the cell projection. The protein resides in the lamellipodium membrane. Its subcellular location is the filopodium membrane. The protein localises to the microvillus membrane. It localises to the ruffle membrane. It is found in the membrane raft. The protein resides in the apical cell membrane. Its subcellular location is the basolateral cell membrane. The protein localises to the invadopodium. It localises to the cytoplasm. It is found in the cytosol. In terms of biological role, mediates effects on cell migration and adhesion through its different partners. During development plays a role in blood and lymphatic vessels separation by binding CLEC1B, triggering CLEC1B activation in platelets and leading to platelet activation and/or aggregation. Interaction with CD9, on the contrary, attenuates platelet aggregation induced by PDPN. Through MSN or EZR interaction promotes epithelial-mesenchymal transition (EMT) leading to ERZ phosphorylation and triggering RHOA activation leading to cell migration increase and invasiveness. Interaction with CD44 promotes directional cell migration in epithelial and tumor cells. In lymph nodes (LNs), controls fibroblastic reticular cells (FRCs) adhesion to the extracellular matrix (ECM) and contraction of the actomyosin by maintaining ERM proteins (EZR; MSN and RDX) and MYL9 activation through association with unknown transmembrane proteins. Engagement of CLEC1B by PDPN promotes FRCs relaxation by blocking lateral membrane interactions leading to reduction of ERM proteins (EZR; MSN and RDX) and MYL9 activation. Through binding with LGALS8 may participate in connection of the lymphatic endothelium to the surrounding extracellular matrix. In keratinocytes, induces changes in cell morphology showing an elongated shape, numerous membrane protrusions, major reorganization of the actin cytoskeleton, increased motility and decreased cell adhesion. Controls invadopodia stability and maturation leading to efficient degradation of the extracellular matrix (ECM) in tumor cells through modulation of RHOC activity in order to activate ROCK1/ROCK2 and LIMK1/LIMK2 and inactivation of CFL1. Required for normal lung cell proliferation and alveolus formation at birth. Does not function as a water channel or as a regulator of aquaporin-type water channels. Does not have any effect on folic acid or amino acid transport. The chain is Podoplanin from Homo sapiens (Human).